A 408-amino-acid chain; its full sequence is Acetate kinase (408 aa).

Asn7 lines the Mg(2+) pocket. Lys14 contacts ATP. Position 91 (Arg91) interacts with substrate. The active-site Proton donor/acceptor is the Asp148. Residues His208–Gly212, Asp283–Arg285, and Gly331–Asn335 contribute to the ATP site. Glu384 contributes to the Mg(2+) binding site.

Belongs to the acetokinase family. As to quaternary structure, homodimer. It depends on Mg(2+) as a cofactor. Requires Mn(2+) as cofactor.

It is found in the cytoplasm. The enzyme catalyses acetate + ATP = acetyl phosphate + ADP. It participates in metabolic intermediate biosynthesis; acetyl-CoA biosynthesis; acetyl-CoA from acetate: step 1/2. Functionally, catalyzes the formation of acetyl phosphate from acetate and ATP. Can also catalyze the reverse reaction. In Methanosarcina barkeri (strain Fusaro / DSM 804), this protein is Acetate kinase.